Reading from the N-terminus, the 79-residue chain is Tungsten-containing formylmethanofuran dehydrogenase 2 subunit G (79 aa).

2 4Fe-4S ferredoxin-type domains span residues 2 to 31 and 51 to 79; these read VKIV…SPNV and TVSV…EIKT. The [4Fe-4S] cluster site is built by C11, C14, C17, C21, C60, C63, C66, and C70.

The cofactor is [4Fe-4S] cluster.

The enzyme catalyses N-formylmethanofuran + 2 oxidized [2Fe-2S]-[ferredoxin] + H2O = methanofuran + 2 reduced [2Fe-2S]-[ferredoxin] + CO2 + H(+). Its pathway is one-carbon metabolism; methanogenesis from CO(2); 5,10-methenyl-5,6,7,8-tetrahydromethanopterin from CO(2): step 1/3. Its activity is regulated as follows. Not inactivated by cyanide. In terms of biological role, catalyzes the reversible oxidation of CO(2) and methanofuran (MFR) to N-formylmethanofuran (CHO-MFR). This enzyme is oxygen-labile. May function as an electron transfer protein. The chain is Tungsten-containing formylmethanofuran dehydrogenase 2 subunit G (fwdG) from Methanopyrus kandleri (strain AV19 / DSM 6324 / JCM 9639 / NBRC 100938).